The primary structure comprises 155 residues: RNA pyrophosphohydrolase (155 aa).

The region spanning 6–148 is the Nudix hydrolase domain; the sequence is GYRANVAIVL…KQEVYRKALT (143 aa). Positions 38–59 match the Nudix box motif; that stretch reads GGVDTGETPLQAMYRELHEEIG.

It belongs to the Nudix hydrolase family. RppH subfamily. A divalent metal cation serves as cofactor.

Its function is as follows. Accelerates the degradation of transcripts by removing pyrophosphate from the 5'-end of triphosphorylated RNA, leading to a more labile monophosphorylated state that can stimulate subsequent ribonuclease cleavage. The chain is RNA pyrophosphohydrolase from Francisella tularensis subsp. mediasiatica (strain FSC147).